Here is a 438-residue protein sequence, read N- to C-terminus: Thymidine phosphorylase (438 aa).

Belongs to the thymidine/pyrimidine-nucleoside phosphorylase family. In terms of assembly, homodimer.

It carries out the reaction thymidine + phosphate = 2-deoxy-alpha-D-ribose 1-phosphate + thymine. Its pathway is pyrimidine metabolism; dTMP biosynthesis via salvage pathway; dTMP from thymine: step 1/2. Functionally, the enzymes which catalyze the reversible phosphorolysis of pyrimidine nucleosides are involved in the degradation of these compounds and in their utilization as carbon and energy sources, or in the rescue of pyrimidine bases for nucleotide synthesis. The sequence is that of Thymidine phosphorylase from Burkholderia cenocepacia (strain ATCC BAA-245 / DSM 16553 / LMG 16656 / NCTC 13227 / J2315 / CF5610) (Burkholderia cepacia (strain J2315)).